The chain runs to 350 residues: MNTRTDVTNDNIDKNPTKRGDRNIPGRNERFNDQNRFNNDRPRPKPRLQPNQPPKQDNKCREENGDFINIRLCAYEKEYCNDGYLSPAYYMLKQVDDEEMSCWSELSSLVRSRKAVGFPLLKAAKRISHGSMLYFEQLKNSKVVKLTPQVKCLNDTVIFQTVVILYSMYKRGIYSNEFCFDLVSIPRTNIVFSVNQLMFNICTDILVVLSICGNRLYRTNLPQSCYLNFIHGHETIARRGYEHSNYFFEWLIKNHISLLTKQTMDILKVKKKYATGAPVNRLLEPGTLVYVPKEDYYFIGISLTDVSISDNVRVLFSTDGIVLEIEDFNIKHLFMAGEMFVRSQSSTIIV.

Polar residues predominate over residues 1-10 (MNTRTDVTND). Residues 1–61 (MNTRTDVTND…QPPKQDNKCR (61 aa)) are disordered. Residues 11 to 43 (NIDKNPTKRGDRNIPGRNERFNDQNRFNNDRPR) are compositionally biased toward basic and acidic residues.

The protein belongs to the orthopoxvirus OPG097 family.

It localises to the virion. The protein localises to the host cytoplasm. Might be required to be present in the virion for transcription of early genes after primo infection. In Homo sapiens (Human), this protein is Protein OPG097 (OPG097).